Reading from the N-terminus, the 270-residue chain is Undecaprenyl-diphosphatase (270 aa).

A run of 7 helical transmembrane segments spans residues 1 to 21 (MTWW…FIPV), 92 to 112 (FRLG…YVLF), 119 to 139 (AFGS…LLLL), 150 to 170 (LSGV…VPGI), 193 to 213 (FSFL…GLEL), 223 to 243 (LSLG…IYVV), and 250 to 270 (GNLQ…LWLL).

It belongs to the UppP family.

It is found in the cell inner membrane. The enzyme catalyses di-trans,octa-cis-undecaprenyl diphosphate + H2O = di-trans,octa-cis-undecaprenyl phosphate + phosphate + H(+). Catalyzes the dephosphorylation of undecaprenyl diphosphate (UPP). Confers resistance to bacitracin. This is Undecaprenyl-diphosphatase from Salinibacter ruber (strain DSM 13855 / M31).